The primary structure comprises 136 residues: MNSQIKNKAVYWGTGRRKTSVARVRLIPGNGQIKINGRSGDDYLNFNPLHLNSIKAPLQTLGLENSYDILVNVFGGGLTGQADAIKQGAARALCELSPDNRKPLKTEGHLSRDPRAKERRKYGLKKARKAPQFSKR.

Positions Ser-97–Arg-136 are disordered. The segment covering Pro-98–Ala-116 has biased composition (basic and acidic residues). Residues Lys-117–Arg-136 show a composition bias toward basic residues.

It belongs to the universal ribosomal protein uS9 family.

This Prochlorococcus marinus (strain MIT 9312) protein is Small ribosomal subunit protein uS9.